The chain runs to 910 residues: DNA mismatch repair protein MutS (910 aa).

Residue 658 to 665 coordinates ATP; that stretch reads GPNMGGKS.

Belongs to the DNA mismatch repair MutS family.

Functionally, this protein is involved in the repair of mismatches in DNA. It is possible that it carries out the mismatch recognition step. This protein has a weak ATPase activity. In Brucella anthropi (strain ATCC 49188 / DSM 6882 / CCUG 24695 / JCM 21032 / LMG 3331 / NBRC 15819 / NCTC 12168 / Alc 37) (Ochrobactrum anthropi), this protein is DNA mismatch repair protein MutS.